We begin with the raw amino-acid sequence, 346 residues long: NADH-ubiquinone oxidoreductase chain 2 (346 aa).

11 helical membrane passes run 1–21, 25–45, 60–80, 95–115, 124–144, 149–169, 178–195, 200–219, 242–262, 274–294, and 326–346; these read MNPH…TITI, HWVL…PLIS, FLTQ…NAWA, CLLL…HFWF, LMTA…LLLM, LNPA…GWMG, ILAF…IILV, LALL…FMAL, ATLM…GFMP, EMTP…FFYL, and AILA…HAIV.

The protein belongs to the complex I subunit 2 family.

It localises to the mitochondrion inner membrane. It carries out the reaction a ubiquinone + NADH + 5 H(+)(in) = a ubiquinol + NAD(+) + 4 H(+)(out). Its function is as follows. Core subunit of the mitochondrial membrane respiratory chain NADH dehydrogenase (Complex I) that is believed to belong to the minimal assembly required for catalysis. Complex I functions in the transfer of electrons from NADH to the respiratory chain. The immediate electron acceptor for the enzyme is believed to be ubiquinone. This is NADH-ubiquinone oxidoreductase chain 2 (MT-ND2) from Mareca americana (American wigeon).